Here is a 333-residue protein sequence, read N- to C-terminus: MYILTIGSHSSLQILHGAKKEGFKTALVTPEKRVKFYKQFTFIDEVYGYKNEDEAVDYINDFANNGILIPHGSLVEYIGPERVNKIKTKIFGNRNLFEWEANQKKKMSLLKSAKIKIPEQFENPEDIDRLVIIKLPGAKGGKGYFIARNKSEAKEGLNKLLEQKMIRSIDEVIIQEYVIGVPMYFQFFNSIILNRLEIMGIDIRYETNIDGLRRLPADIKIDPTLVVVGNIPAVARESLLPLVYEYGENFVNTVKELVPPGMIGPFCLESVVTDQGDIVVFEFSGRIVAGTNLYVNGSPYSWLYWDEPMSVGRRISREIKLAINSNKLEQVLT.

Residues histidine 9 and serine 73 each coordinate 5-amino-1-(5-phospho-beta-D-ribosyl)imidazole-4-carboxamide. An ATP-grasp domain is found at 94 to 324 (RNLFEWEANQ…ISREIKLAIN (231 aa)). ATP-binding positions include 124 to 184 (PEDI…VPMY) and glutamate 206. Asparagine 230 lines the 5-amino-1-(5-phospho-beta-D-ribosyl)imidazole-4-carboxamide pocket. Mg(2+) contacts are provided by glutamate 269 and glutamate 282.

Belongs to the phosphohexose mutase family. It depends on Mg(2+) as a cofactor. The cofactor is Mn(2+).

The catalysed reaction is 5-amino-1-(5-phospho-beta-D-ribosyl)imidazole-4-carboxamide + formate + ATP = 5-formamido-1-(5-phospho-D-ribosyl)imidazole-4-carboxamide + ADP + phosphate. Its pathway is purine metabolism; IMP biosynthesis via de novo pathway; 5-formamido-1-(5-phospho-D-ribosyl)imidazole-4-carboxamide from 5-amino-1-(5-phospho-D-ribosyl)imidazole-4-carboxamide (formate route): step 1/1. Its function is as follows. Catalyzes the ATP- and formate-dependent formylation of 5-aminoimidazole-4-carboxamide-1-beta-d-ribofuranosyl 5'-monophosphate (AICAR) to 5-formaminoimidazole-4-carboxamide-1-beta-d-ribofuranosyl 5'-monophosphate (FAICAR) in the absence of folates. This chain is 5-formaminoimidazole-4-carboxamide-1-(beta)-D-ribofuranosyl 5'-monophosphate synthetase, found in Sulfurisphaera tokodaii (strain DSM 16993 / JCM 10545 / NBRC 100140 / 7) (Sulfolobus tokodaii).